The sequence spans 162 residues: Large ribosomal subunit protein uL30 (162 aa).

The protein belongs to the universal ribosomal protein uL30 family. Part of the 50S ribosomal subunit.

The protein is Large ribosomal subunit protein uL30 of Staphylothermus marinus (strain ATCC 43588 / DSM 3639 / JCM 9404 / F1).